The primary structure comprises 254 residues: MNDEEEMNEEGIAAASNNTTTANDSMWINIMQTEVTRLSSKVTAHEHNVREMFEHRARDAKTAMDDMVSEMNKRMDDLAARIVVLEDEKAELRRINQRLTEKVRDKDMEKAAVNDIGIKNKDRHLPEVDGSQPMITNDVSYHLVEDACRRSARKLYLLVEEVKLYKPDCKFEDYRHISSTPRINTWDSDYDEEEHERQKQTIKTLLEPLIVKIGDTGLVDIRRLYKACIRCDMSSSASVMRKDCFYDRDVANMM.

Positions Asp-66–Ala-111 form a coiled coil.

This is an uncharacterized protein from Ostreid herpesvirus 1 (isolate France) (OsHV-1).